The primary structure comprises 99 residues: Large ribosomal subunit protein uL23 (99 aa).

The protein belongs to the universal ribosomal protein uL23 family. Part of the 50S ribosomal subunit. Contacts protein L29, and trigger factor when it is bound to the ribosome.

Its function is as follows. One of the early assembly proteins it binds 23S rRNA. One of the proteins that surrounds the polypeptide exit tunnel on the outside of the ribosome. Forms the main docking site for trigger factor binding to the ribosome. This is Large ribosomal subunit protein uL23 from Azotobacter vinelandii (strain DJ / ATCC BAA-1303).